The chain runs to 96 residues: Class I hydrophobin 2 (96 aa).

The N-terminal stretch at 1–15 is a signal peptide; sequence MFKALIVALAAVAAA. 4 cysteine pairs are disulfide-bonded: C28–C77, C34–C71, C35–C55, and C78–C91.

It belongs to the fungal hydrophobin family.

The protein localises to the secreted. It localises to the cell wall. Functionally, aerial growth, conidiation, and dispersal of filamentous fungi in the environment rely upon a capability of their secreting small amphipathic proteins called hydrophobins (HPBs) with low sequence identity. Class I can self-assemble into an outermost layer of rodlet bundles on aerial cell surfaces, conferring cellular hydrophobicity that supports fungal growth, development and dispersal; whereas Class II form highly ordered films at water-air interfaces through intermolecular interactions but contribute nothing to the rodlet structure. Hyd2 plays a neglectable role in hyphal growth and asexual development and does not seem involved in cellular hydrophobicity, conidial adhesion, stress tolerance nor insect pathogenicity. This Metarhizium robertsii (strain ARSEF 23 / ATCC MYA-3075) (Metarhizium anisopliae (strain ARSEF 23)) protein is Class I hydrophobin 2.